Reading from the N-terminus, the 659-residue chain is Sodium/nucleoside cotransporter 2 (659 aa).

Positions 1–10 (MAKSEGRKSA) are enriched in basic and acidic residues. Positions 1-22 (MAKSEGRKSASQDTSENGMENP) are disordered. Serine 46 bears the Phosphoserine mark. Helical transmembrane passes span 81–101 (ILLG…CILN), 105–124 (ALAL…CHFL), 149–167 (KRVF…LALD), 173–193 (EQLI…ACSK), 201–221 (RTVF…IRTE), 234–254 (IQIF…DTLV), 261–281 (QSLP…YLGL), 296–315 (TMGT…FVGM), 337–356 (VMTG…FISF), 363–382 (LISA…KLVY), 424–444 (VAAN…TLSW), 455–475 (TFQV…GVQW), 530–550 (ATFS…LGGL), and 568–588 (ALFT…ILYV).

Belongs to the concentrative nucleoside transporter (CNT) (TC 2.A.41) family. In terms of tissue distribution, expressed in liver (in bile canalicular membrane vesicles (CMV) but not in sinusoidal vesicles), jejunum, spleen and heart. Also expressed in brain and skeletal muscle. Not expressed in kidney, muscle and lung.

It localises to the membrane. It is found in the apicolateral cell membrane. The enzyme catalyses adenosine(out) + Na(+)(out) = adenosine(in) + Na(+)(in). It carries out the reaction inosine(out) + Na(+)(out) = inosine(in) + Na(+)(in). The catalysed reaction is guanosine(out) + Na(+)(out) = guanosine(in) + Na(+)(in). It catalyses the reaction uridine(out) + Na(+)(out) = uridine(in) + Na(+)(in). With respect to regulation, inhibited by formycin B, partially inhibited by purine analog ara-A. Its function is as follows. Sodium-dependent and purine-selective. Exhibits the transport characteristics of the nucleoside transport system cif or N1 subtype (N1/cif) (selective for purine nucleosides and uridine). Accepts purine, analogs of purine nucleosides and uridine, and exhibits high affinity for adenosine. May contribute to regulate the transport of organic compounds in testes across the blood-testis-barrier. The chain is Sodium/nucleoside cotransporter 2 (Slc28a2) from Rattus norvegicus (Rat).